We begin with the raw amino-acid sequence, 131 residues long: Sec-independent protein translocase protein TatB (131 aa).

A helical transmembrane segment spans residues 2–22 (FDGIGFMELLLIGVLGLVVLG). Residues 69–131 (NQGLKNLAPE…ENAKSDKPNG (63 aa)) form a disordered region. A compositionally biased stretch (low complexity) spans 105 to 123 (AKETPAKETATTETTSTEN).

Belongs to the TatB family. In terms of assembly, the Tat system comprises two distinct complexes: a TatABC complex, containing multiple copies of TatA, TatB and TatC subunits, and a separate TatA complex, containing only TatA subunits. Substrates initially bind to the TatABC complex, which probably triggers association of the separate TatA complex to form the active translocon.

The protein localises to the cell inner membrane. In terms of biological role, part of the twin-arginine translocation (Tat) system that transports large folded proteins containing a characteristic twin-arginine motif in their signal peptide across membranes. Together with TatC, TatB is part of a receptor directly interacting with Tat signal peptides. TatB may form an oligomeric binding site that transiently accommodates folded Tat precursor proteins before their translocation. In Shewanella piezotolerans (strain WP3 / JCM 13877), this protein is Sec-independent protein translocase protein TatB.